A 140-amino-acid chain; its full sequence is Class I hydrophobin B (140 aa).

A signal peptide spans 1–16; it reads MKFLAVVSLLAATALA. 4 disulfide bridges follow: Cys42/Cys113, Cys50/Cys107, Cys51/Cys88, and Cys114/Cys133. N-linked (GlcNAc...) asparagine glycosylation occurs at Asn117.

Belongs to the fungal hydrophobin family. In terms of assembly, self-assembles to form functional amyloid fibrils called rodlets. Self-assembly into fibrillar rodlets occurs spontaneously at hydrophobic:hydrophilic interfaces and the rodlets further associate laterally to form amphipathic monolayers.

It localises to the secreted. The protein localises to the spore wall. Aerial growth, conidiation, and dispersal of filamentous fungi in the environment rely upon a capability of their secreting small amphipathic proteins called hydrophobins (HPBs) with low sequence identity. Class I can self-assemble into an outermost layer of rodlet bundles on aerial cell surfaces, conferring cellular hydrophobicity that supports fungal growth, development and dispersal; whereas Class II form highly ordered films at water-air interfaces through intermolecular interactions but contribute nothing to the rodlet structure. RodB is a class I hydrophobin that, unlike rodA, is not required for rodlet formation. The protein is Class I hydrophobin B of Aspergillus fumigatus (strain ATCC MYA-4609 / CBS 101355 / FGSC A1100 / Af293) (Neosartorya fumigata).